We begin with the raw amino-acid sequence, 152 residues long: Large ribosomal subunit protein bL9 (152 aa).

It belongs to the bacterial ribosomal protein bL9 family.

Binds to the 23S rRNA. This Mycobacterium ulcerans (strain Agy99) protein is Large ribosomal subunit protein bL9.